A 736-amino-acid chain; its full sequence is Catalase-peroxidase (736 aa).

Positions 1–21 (MFKKTILSFVISAVMVTAASA) are cleaved as a signal peptide. The segment at residues 102-224 (WHAAGTYRTH…LAAVEMGLIY (123 aa)) is a cross-link (tryptophyl-tyrosyl-methioninium (Trp-Tyr) (with M-250)). Catalysis depends on histidine 103, which acts as the Proton acceptor. Positions 224–250 (YVNPVGPHGNPDPLLAANDIRMSFGRM) form a cross-link, tryptophyl-tyrosyl-methioninium (Tyr-Met) (with W-102). Histidine 265 is a binding site for heme b.

Belongs to the peroxidase family. Peroxidase/catalase subfamily. Homodimer or homotetramer. Heme b serves as cofactor. Formation of the three residue Trp-Tyr-Met cross-link is important for the catalase, but not the peroxidase activity of the enzyme.

The catalysed reaction is H2O2 + AH2 = A + 2 H2O. It catalyses the reaction 2 H2O2 = O2 + 2 H2O. Its function is as follows. Bifunctional enzyme with both catalase and broad-spectrum peroxidase activity. The polypeptide is Catalase-peroxidase (Shewanella woodyi (strain ATCC 51908 / MS32)).